Reading from the N-terminus, the 434-residue chain is Enolase (434 aa).

Position 163 (Gln163) interacts with (2R)-2-phosphoglycerate. Glu205 acts as the Proton donor in catalysis. 3 residues coordinate Mg(2+): Asp242, Glu291, and Asp318. Lys343, Arg372, Ser373, and Lys394 together coordinate (2R)-2-phosphoglycerate. The active-site Proton acceptor is the Lys343.

This sequence belongs to the enolase family. Mg(2+) is required as a cofactor.

Its subcellular location is the cytoplasm. The protein resides in the secreted. The protein localises to the cell surface. It carries out the reaction (2R)-2-phosphoglycerate = phosphoenolpyruvate + H2O. It functions in the pathway carbohydrate degradation; glycolysis; pyruvate from D-glyceraldehyde 3-phosphate: step 4/5. Functionally, catalyzes the reversible conversion of 2-phosphoglycerate (2-PG) into phosphoenolpyruvate (PEP). It is essential for the degradation of carbohydrates via glycolysis. The polypeptide is Enolase (Streptococcus sanguinis (strain SK36)).